Here is a 1755-residue protein sequence, read N- to C-terminus: Transposon Ty1-GR1 Gag-Pol polyprotein (1755 aa).

Residues 1–16 are compositionally biased toward low complexity; that stretch reads MESQQLSQHSHISHGS. Disordered regions lie at residues 1 to 93, 126 to 173, and 352 to 421; these read MESQ…MMTQ, PQSQ…RPPP, and GSRN…SKST. Polar residues-rich tracts occupy residues 48-60, 71-93, and 127-152; these read TKAN…TPAS, SPQT…MMTQ, and QSQF…GNTF. Residues 153–165 are compositionally biased toward low complexity; sequence TDSSSADSDMTST. The interval 299–401 is RNA-binding; sequence NNGIHINNKV…NSKSKTARAH (103 aa). Over residues 402–418 the composition is skewed to low complexity; it reads NVSTSNNSPSTDNDSIS. Ser416 bears the Phosphoserine mark. The For protease activity; shared with dimeric partner role is filled by Asp461. The tract at residues 583–640 is integrase-type zinc finger-like; the sequence is NVHTSESTRKYPYPFIHRMLAHANAQTIRYSLKNNTITYFNESDVDWSSAIDYQCPDC. The Integrase catalytic domain occupies 660–835; sequence NSYEPFQYLH…AGLDISTLLP (176 aa). The Mg(2+) site is built by Asp671 and Asp736. 3 disordered regions span residues 956–1087, 1092–1111, and 1130–1187; these read SKAV…ETEK, RSPS…NIVP, and DLPL…DNET. A compositionally biased stretch (low complexity) spans 960 to 969; sequence SPTDSTPPST. The span at 1005 to 1015 shows a compositional bias: polar residues; that stretch reads STPQISNIEST. Residues 1038–1053 show a composition bias toward basic and acidic residues; that stretch reads ESSHASKSKDFRHSDS. Polar residues-rich tracts occupy residues 1054–1082 and 1101–1111; these read YSEN…QISD and PENNSSHNIVP. Residues 1178–1212 carry the Bipartite nuclear localization signal motif; it reads KKRSLEDNETEIKVSRDTWNTKNMRSLEPPRSKKR. The region spanning 1338–1476 is the Reverse transcriptase Ty1/copia-type domain; sequence NNYYITQLDI…DILGLEIKYQ (139 aa). Mg(2+)-binding residues include Asp1346, Asp1427, Asp1428, Asp1610, Glu1652, and Asp1685. One can recognise an RNase H Ty1/copia-type domain in the interval 1610-1752; it reads DASYGNQPYY…IKTFKLLTNK (143 aa).

The capsid protein forms a homotrimer, from which the VLPs are assembled. The protease is a homodimer, whose active site consists of two apposed aspartic acid residues. Initially, virus-like particles (VLPs) are composed of the structural unprocessed proteins Gag and Gag-Pol, and also contain the host initiator methionine tRNA (tRNA(i)-Met) which serves as a primer for minus-strand DNA synthesis, and a dimer of genomic Ty RNA. Processing of the polyproteins occurs within the particle and proceeds by an ordered pathway, called maturation. First, the protease (PR) is released by autocatalytic cleavage of the Gag-Pol polyprotein yielding capsid protein p45 and a Pol-p154 precursor protein. This cleavage is a prerequisite for subsequent processing of Pol-p154 at the remaining sites to release the mature structural and catalytic proteins. Maturation takes place prior to the RT reaction and is required to produce transposition-competent VLPs.

The protein localises to the cytoplasm. It localises to the nucleus. The enzyme catalyses DNA(n) + a 2'-deoxyribonucleoside 5'-triphosphate = DNA(n+1) + diphosphate. It carries out the reaction Endonucleolytic cleavage to 5'-phosphomonoester.. Its function is as follows. Capsid protein (CA) is the structural component of the virus-like particle (VLP), forming the shell that encapsulates the retrotransposons dimeric RNA genome. The particles are assembled from trimer-clustered units and there are holes in the capsid shells that allow for the diffusion of macromolecules. CA also has nucleocapsid-like chaperone activity, promoting primer tRNA(i)-Met annealing to the multipartite primer-binding site (PBS), dimerization of Ty1 RNA and initiation of reverse transcription. Functionally, the aspartyl protease (PR) mediates the proteolytic cleavages of the Gag and Gag-Pol polyproteins after assembly of the VLP. In terms of biological role, reverse transcriptase/ribonuclease H (RT) is a multifunctional enzyme that catalyzes the conversion of the retro-elements RNA genome into dsDNA within the VLP. The enzyme displays a DNA polymerase activity that can copy either DNA or RNA templates, and a ribonuclease H (RNase H) activity that cleaves the RNA strand of RNA-DNA heteroduplexes during plus-strand synthesis and hydrolyzes RNA primers. The conversion leads to a linear dsDNA copy of the retrotransposon that includes long terminal repeats (LTRs) at both ends. Integrase (IN) targets the VLP to the nucleus, where a subparticle preintegration complex (PIC) containing at least integrase and the newly synthesized dsDNA copy of the retrotransposon must transit the nuclear membrane. Once in the nucleus, integrase performs the integration of the dsDNA into the host genome. The polypeptide is Transposon Ty1-GR1 Gag-Pol polyprotein (TY1B-GR1) (Saccharomyces cerevisiae (strain ATCC 204508 / S288c) (Baker's yeast)).